The primary structure comprises 238 residues: Probable transcriptional regulatory protein VIBHAR_07036 (238 aa).

This sequence belongs to the TACO1 family.

The protein resides in the cytoplasm. This chain is Probable transcriptional regulatory protein VIBHAR_07036, found in Vibrio campbellii (strain ATCC BAA-1116).